Reading from the N-terminus, the 410-residue chain is Peptidase T (410 aa).

His-77 lines the Zn(2+) pocket. Residue Asp-79 is part of the active site. Asp-140 is a Zn(2+) binding site. The Proton acceptor role is filled by Glu-174. Zn(2+)-binding residues include Glu-175, Asp-197, and His-379.

The protein belongs to the peptidase M20B family. Requires Zn(2+) as cofactor.

The protein resides in the cytoplasm. It catalyses the reaction Release of the N-terminal residue from a tripeptide.. Cleaves the N-terminal amino acid of tripeptides. The polypeptide is Peptidase T (Desulfitobacterium hafniense (strain Y51)).